The chain runs to 400 residues: Formate-dependent phosphoribosylglycinamide formyltransferase (400 aa).

Residues 22–23 (EL) and glutamate 82 each bind N(1)-(5-phospho-beta-D-ribosyl)glycinamide. ATP-binding positions include arginine 115, lysine 156, 161-166 (SSGKGQ), 196-199 (EGFI), and glutamate 204. The region spanning 120 to 309 (RLAAETLGLP…EFALHARAIL (190 aa)) is the ATP-grasp domain. The Mg(2+) site is built by glutamate 268 and glutamate 280. Residues aspartate 287, lysine 361, and 368–369 (RR) each bind N(1)-(5-phospho-beta-D-ribosyl)glycinamide.

Belongs to the PurK/PurT family. Homodimer.

It catalyses the reaction N(1)-(5-phospho-beta-D-ribosyl)glycinamide + formate + ATP = N(2)-formyl-N(1)-(5-phospho-beta-D-ribosyl)glycinamide + ADP + phosphate + H(+). The protein operates within purine metabolism; IMP biosynthesis via de novo pathway; N(2)-formyl-N(1)-(5-phospho-D-ribosyl)glycinamide from N(1)-(5-phospho-D-ribosyl)glycinamide (formate route): step 1/1. Functionally, involved in the de novo purine biosynthesis. Catalyzes the transfer of formate to 5-phospho-ribosyl-glycinamide (GAR), producing 5-phospho-ribosyl-N-formylglycinamide (FGAR). Formate is provided by PurU via hydrolysis of 10-formyl-tetrahydrofolate. This is Formate-dependent phosphoribosylglycinamide formyltransferase from Xanthomonas oryzae pv. oryzae (strain PXO99A).